The chain runs to 597 residues: Elongation factor 4 (597 aa).

The tr-type G domain occupies 2 to 184 (KHIRNFSIIA…TIVKSIPAPE (183 aa)). GTP contacts are provided by residues 14–19 (DHGKST) and 131–134 (NKID).

The protein belongs to the TRAFAC class translation factor GTPase superfamily. Classic translation factor GTPase family. LepA subfamily.

It is found in the cell inner membrane. It carries out the reaction GTP + H2O = GDP + phosphate + H(+). In terms of biological role, required for accurate and efficient protein synthesis under certain stress conditions. May act as a fidelity factor of the translation reaction, by catalyzing a one-codon backward translocation of tRNAs on improperly translocated ribosomes. Back-translocation proceeds from a post-translocation (POST) complex to a pre-translocation (PRE) complex, thus giving elongation factor G a second chance to translocate the tRNAs correctly. Binds to ribosomes in a GTP-dependent manner. This is Elongation factor 4 from Aliivibrio fischeri (strain ATCC 700601 / ES114) (Vibrio fischeri).